The chain runs to 120 residues: MSNKNEALLRRKARVRRALRAAANGRPRLSVFRSSKQIYVQVIDDAAGRTLAAASSLDKDLKSSLKTGADKAAAEAVGKLVAERAKAAGVTKVVFDRSGYIFHGRVKALADAAREGGLDF.

It belongs to the universal ribosomal protein uL18 family. As to quaternary structure, part of the 50S ribosomal subunit; part of the 5S rRNA/L5/L18/L25 subcomplex. Contacts the 5S and 23S rRNAs.

Its function is as follows. This is one of the proteins that bind and probably mediate the attachment of the 5S RNA into the large ribosomal subunit, where it forms part of the central protuberance. In Methylorubrum extorquens (strain CM4 / NCIMB 13688) (Methylobacterium extorquens), this protein is Large ribosomal subunit protein uL18.